We begin with the raw amino-acid sequence, 407 residues long: uncharacterized protein (407 aa).

12 helical membrane-spanning segments follow: residues 22 to 42 (IVSVVSFTFICYLTIGLPLAV), 51 to 71 (LGFSAIVAGAAISVQYFATLA), 101 to 121 (ALLLSAFAFARWPAASIVLLV), 126 to 146 (VLGIGESLVGTGAILWGIGRV), 154 to 174 (VISWNGIATYGALAIGAPVGV), 179 to 199 (ALIPAVLGMLVIALAALGYYL), 227 to 247 (GLGLALGSAGFGSIATFITLY), 258 to 278 (LSLTVFGTLFIGARLLFANTI), 286 to 306 (VAIVSFAFECAGLLMLWLAPV), 309 to 329 (VALVGAALTGFGFALIFPALG), 347 to 367 (AYSVFLDLSLGITGPLAGYVA), and 369 to 389 (AFGYPQVFLCAAVAAAAGVAL).

Belongs to the major facilitator superfamily. YhhS family.

The protein localises to the cell inner membrane. This is an uncharacterized protein from Burkholderia pseudomallei (strain 1106a).